A 161-amino-acid chain; its full sequence is Urease accessory protein UreE (161 aa).

The disordered stretch occupies residues 138 to 161 (RGAYHAHGGHSHDHGQGHHHHDHG).

It belongs to the UreE family.

Its subcellular location is the cytoplasm. Its function is as follows. Involved in urease metallocenter assembly. Binds nickel. Probably functions as a nickel donor during metallocenter assembly. The polypeptide is Urease accessory protein UreE (Agrobacterium fabrum (strain C58 / ATCC 33970) (Agrobacterium tumefaciens (strain C58))).